We begin with the raw amino-acid sequence, 87 residues long: Large ribosomal subunit protein bL27 (87 aa).

The protein belongs to the bacterial ribosomal protein bL27 family.

The polypeptide is Large ribosomal subunit protein bL27 (Wigglesworthia glossinidia brevipalpis).